Here is a 447-residue protein sequence, read N- to C-terminus: Phosphoglucosamine mutase (447 aa).

Ser-100 serves as the catalytic Phosphoserine intermediate. Mg(2+)-binding residues include Ser-100, Asp-239, Asp-241, and Asp-243. Ser-100 carries the post-translational modification Phosphoserine.

It belongs to the phosphohexose mutase family. Mg(2+) is required as a cofactor. Activated by phosphorylation.

It carries out the reaction alpha-D-glucosamine 1-phosphate = D-glucosamine 6-phosphate. Its function is as follows. Catalyzes the conversion of glucosamine-6-phosphate to glucosamine-1-phosphate. The protein is Phosphoglucosamine mutase of Caldanaerobacter subterraneus subsp. tengcongensis (strain DSM 15242 / JCM 11007 / NBRC 100824 / MB4) (Thermoanaerobacter tengcongensis).